A 532-amino-acid polypeptide reads, in one-letter code: Undecaprenyl-phosphate glucose phosphotransferase (532 aa).

5 consecutive transmembrane segments (helical) span residues 81–101, 110–130, 155–175, 183–203, and 344–364; these read QVVVLSDAFCVCLAVVACIAW, ELSGALLLANIMAAGAFFLFP, VAFGEVVFCTVLVMLSWPFGV, WLTFVVAILFVERCVGTYILH, and TASVLLLLALAPLLTLVALAI.

Belongs to the bacterial sugar transferase family.

The protein resides in the membrane. The catalysed reaction is di-trans,octa-cis-undecaprenyl phosphate + UDP-alpha-D-glucose = alpha-D-glucosyl di-trans,octa-cis-undecaprenyl diphosphate + UMP. Involved in the biosynthesis of the exopolysaccharide acetan, a water-soluble polysaccharide involved in production of bacterial cellulose (BC). This chain is Undecaprenyl-phosphate glucose phosphotransferase (aceA), found in Komagataeibacter xylinus (Gluconacetobacter xylinus).